Reading from the N-terminus, the 628-residue chain is Hepatocyte nuclear factor 1-alpha (628 aa).

The segment at 1 to 31 is dimerization; it reads MVSKLSQLQTELLAALLESGLSKEALIQALG. Residues 1–32 enclose the HNF-p1 domain; it reads MVSKLSQLQTELLAALLESGLSKEALIQALGE. Residues 47-79 are disordered; that stretch reads GESCGGTRGDLTELPNGLGETRGSEDDTDDDGE. Serine 70 carries the phosphoserine modification. Position 74 is a phosphothreonine (threonine 74). Residues 87–182 enclose the POU-specific atypical domain; sequence KELENLSPEE…VAQQFTHAGQ (96 aa). The residue at position 93 (serine 93) is a Phosphoserine. Lysine 117 is covalently cross-linked (Glycyl lysine isopeptide (Lys-Gly) (interchain with G-Cter in ubiquitin)). 4 interaction with DNA regions span residues 130–132, 143–149, 155–158, and 203–206; these read QRE, HLSQHLN, KTQK, and RFKW. A disordered region spans residues 183–205; the sequence is GGLIEEPTGDELPTKKGRRNRFK. A Nuclear localization signal motif is present at residues 197 to 205; that stretch reads KKGRRNRFK. A DNA-binding region (homeobox; HNF1-type) is located at residues 199–279; it reads GRRNRFKWGP…NRRKEEAFRH (81 aa). A Phosphoserine modification is found at serine 247. 2 interaction with DNA regions span residues 263 to 265 and 270 to 273; these read RVY and NRRK. Disordered stretches follow at residues 284–338 and 541–585; these read DTYN…SSSG and FTSD…LSTS. Pro residues predominate over residues 288-298; the sequence is GPPPGPGPGPA. Position 313 is a phosphoserine (serine 313). Composition is skewed to polar residues over residues 324-338 and 558-575; these read QSAT…SSSG and SPAT…NIQH.

It belongs to the HNF1 homeobox family. As to quaternary structure, binds DNA as a dimer. Heterotetramer with PCBD1; formed by a dimer of dimers. Interacts with PCBD1. Interacts with BHLHE41. Interacts with NR5A2. Interacts with SPOP; this interaction promotes ubiquitination and degradation of HNF1A. In terms of processing, ubiquitinated in s SPOP-dependent manner; leading to prteasomal degradation. Liver.

Its subcellular location is the nucleus. Functionally, transcriptional activator that regulates the tissue specific expression of multiple genes, especially in pancreatic islet cells and in liver. Binds to the inverted palindrome 5'-GTTAATNATTAAC-3'. Activates the transcription of CYP1A2, CYP2E1 and CYP3A11. In Rattus norvegicus (Rat), this protein is Hepatocyte nuclear factor 1-alpha (Hnf1a).